Consider the following 908-residue polypeptide: Translation initiation factor IF-2 (908 aa).

Disordered regions lie at residues E123–K154 and K212–K278. A tr-type G domain is found at E407–K577. Positions G416–T423 are G1. G416–T423 serves as a coordination point for GTP. Residues G441–H445 form a G2 region. The tract at residues D463–G466 is G3. Residues D463–H467 and N517–D520 each bind GTP. A G4 region spans residues N517–D520. Residues S553–I555 form a G5 region.

This sequence belongs to the TRAFAC class translation factor GTPase superfamily. Classic translation factor GTPase family. IF-2 subfamily.

Its subcellular location is the cytoplasm. One of the essential components for the initiation of protein synthesis. Protects formylmethionyl-tRNA from spontaneous hydrolysis and promotes its binding to the 30S ribosomal subunits. Also involved in the hydrolysis of GTP during the formation of the 70S ribosomal complex. The protein is Translation initiation factor IF-2 of Amoebophilus asiaticus (strain 5a2).